A 150-amino-acid chain; its full sequence is Propanediol utilization protein PduV (150 aa).

Positions 1–42 are targets protein to the BMC; sequence MKRIMLIGPSQCGKTSLTQCMRGEALHYQKTQAIVWSPTTID. Position 8 to 15 (8 to 15) interacts with GTP; sequence GPSQCGKT.

It belongs to the EutP/PduV family. As to quaternary structure, interacts with PduU, probably via the PduU beta-barrel which is predicted by modeling to be on the exterior of the BMC.

The protein resides in the bacterial microcompartment. It participates in polyol metabolism; 1,2-propanediol degradation. Functionally, may play a role in the spatial distribution of the bacterial microcompartment (BMC) dedicated to 1,2-PD degradation, perhaps being involved in cytoskeleton dynamics; might bind GTP. This subunit is directly targeted to the BMC. Expression of a cosmid containing the full 21-gene pdu operon in E.coli allows E.coli to grow on 1,2-propanediol (1,2-PD) with the appearance of bacterial microcompartments (BMC) in its cytoplasm. Its function is as follows. The 1,2-PD-specific bacterial microcompartment (BMC) concentrates low levels of 1,2-PD catabolic enzymes, concentrates volatile reaction intermediates thus enhancing pathway flux and keeps the level of toxic, mutagenic propionaldehyde low. The protein is Propanediol utilization protein PduV of Citrobacter freundii.